The following is a 274-amino-acid chain: Large ribosomal subunit protein uL2 (274 aa).

Disordered stretches follow at residues 28 to 59 (APYA…GGHK) and 222 to 274 (GAAM…RRTK). Over residues 39 to 49 (KSGGRNNNGRI) the composition is skewed to polar residues. Basic and acidic residues predominate over residues 229–239 (DHPHGGGEGRS).

Belongs to the universal ribosomal protein uL2 family. In terms of assembly, part of the 50S ribosomal subunit. Forms a bridge to the 30S subunit in the 70S ribosome.

Its function is as follows. One of the primary rRNA binding proteins. Required for association of the 30S and 50S subunits to form the 70S ribosome, for tRNA binding and peptide bond formation. It has been suggested to have peptidyltransferase activity; this is somewhat controversial. Makes several contacts with the 16S rRNA in the 70S ribosome. This is Large ribosomal subunit protein uL2 from Marinomonas sp. (strain MWYL1).